Consider the following 808-residue polypeptide: MAFTFTSAHLFLPVTENHSVHVNYSIPPGNWRLWSTAKGGSNKLDIRRLRCSARRTPEPLAQGSNGGRDGVEAIQRLQTIADDKIDGGANELGIVVWDLIRDGVDAVKSMFDSMGDGDISISAYDTAWVALVKDVNGSGGPQFPSSLQWIVDNQLPDGSWGDSEVFSAYDRLLKTLACVVALKSWNIRPDKCQKGLKFFRDNISKLEKENVEASAQMLSGFEVVFLSLIEVARRLDIQIPLHSPVFEDLIARRNLKFAKIPLDLMHNVPTSLLNSLEGMTGVELDWEKLLKLQSQDGSFITSPSSTAFALMQTNDTKCLGYLKFVVQKFNGGAPGQYPVEIFERIWVVDRLQRLGISRYFQLEIKECCLDYAFKHWTQYGSSWARNTPVYDLDDTCMAFRILRLHGYDVSAEAFRHFEKNGVFFCFGWETTQSVTVNFNLYRATQVAFPGENILKEAKQFSFNFLMKKQAAREFQDKWVILKDFPGELKYALEFPWYASLPRVETRFYVEQYGGDNDVWIGKTLYRMPYINNNVYLELAKLDFNNCQALHRKEWETMQKWFMESKLDEFGVSSKTLLESYFLAAASIFEPERSTERLAWAKTAFLMETIGSYFDDEMNSKDLRKAFVQEFKNIYERRMEAKGTKWNLIIILLTTLNHLTEVCGRDINSYLCHSWEKWMMMWEPEGDRYKGAAELLSNSINLSSGRLFSNDTLSHPNYEKLVTLSNKLCHQLGNSRRGNHNEDSDIKDTKIEIAMQELVQLVHQNSSDDISMDLKQTFFAVVRSFYYAAHCDRGTINSHIVKVLFESVV.

Residues 1 to 50 (MAFTFTSAHLFLPVTENHSVHVNYSIPPGNWRLWSTAKGGSNKLDIRRLR) constitute a chloroplast transit peptide. Residues 190–219 (DKCQKGLKFFRDNISKLEKENVEASAQMLS) adopt a coiled-coil conformation. Residue Lys256 coordinates substrate. Mg(2+) is bound by residues Asp391 and Asp393. A DXDD motif motif is present at residues 391 to 394 (DLDD). Lys477 is a substrate binding site.

The protein belongs to the terpene synthase family. Mg(2+) serves as cofactor. As to expression, expressed in stems, leaves and trichomes. Not detected in roots and seeds. Higher expression in young leaves than in fully expanded leaves.

Its subcellular location is the plastid. It localises to the chloroplast. It catalyses the reaction (2E,6E,10E)-geranylgeranyl diphosphate + H2O = 8-hydroxycopalyl diphosphate. It functions in the pathway secondary metabolite biosynthesis; terpenoid biosynthesis. Involved in the biosynthesis of oxygen-containing labdane-type diterpenes that may be implicated in direct and indirect defense mechanisms. No activity with geranyl diphosphate or farnesyl diphosphate as substrate. The chain is Copal-8-ol diphosphate hydratase, chloroplastic from Cistus creticus subsp. creticus (Rock rose).